The following is a 234-amino-acid chain: Sugar fermentation stimulation protein homolog (234 aa).

It belongs to the SfsA family.

The polypeptide is Sugar fermentation stimulation protein homolog (Shewanella baltica (strain OS223)).